We begin with the raw amino-acid sequence, 802 residues long: Aldehyde dehydrogenase family 16 member A1 (802 aa).

The protein belongs to the aldehyde dehydrogenase family. As to quaternary structure, interacts with SPG21.

The polypeptide is Aldehyde dehydrogenase family 16 member A1 (Aldh16a1) (Mus musculus (Mouse)).